Here is a 516-residue protein sequence, read N- to C-terminus: MEEFQGYLEKYRSRRQYFLYPLLFQEYIYTIAHGHGLNGSSKIEPVEFFGYDNKSSLVLVKRLITRMYQQNCLVYSINDSNQNRFIGRDLFFYSPLFFQMVSEGFAAIVEIPFSLQLGFSFKEKEIQKYHNLRSIHSIFPFLEDKFSHLNYVSEILIPHPIHTETLVQILQCWVQDVPSLHFLRFFLHKYDNWNSFIIPNKSSYAFSKENKKLFWFFYNSYVFEFEFLVVXLRKQSYYLQSTSFGXFLXRRNFYGKMEHLINVCRNYSQKTLRFFKDPFMHYIRYQGKAILASRDTHILMKKWKCYLVNFWQYYFHFWSYSYRIHINQLKNHSFLLGGYFSSVLINPLAVKNKMLDHSFLIDTVTKKFDTTIPVIPLIGSLSKAKFCTVLGHPNSKTIWADLSDSDIVGRFGRICRNLSHYYSGSSKKQSLYRIKYXXRLSCARTLARKHKRTIRALLQRLGTGFLEEFFTEEEQVLSLIFPKTTIPFPLYGLHRERIWNLDIIRIDDLVNHLDWP.

This sequence belongs to the intron maturase 2 family. MatK subfamily.

Its subcellular location is the plastid. It is found in the chloroplast. Its function is as follows. Usually encoded in the trnK tRNA gene intron. Probably assists in splicing its own and other chloroplast group II introns. This chain is Maturase K, found in Colchicum speciosum (Giant meadow saffron).